The primary structure comprises 3707 residues: MTVLYLVKDYIEVVHKLIETSPSHVLQHSTYNDSLTIINFGLSTLKQLCSNFFSFEWLKQLWYFPIIVPEIATSMMEEISVLDGNFHNILSFLDKPVAVGNEIYGDYYLPLTCFEKIFTGLVNSLFIWIPTSTATFLCFRRFIMQGVEAGYAAALGTMAATVFWLASILFGLRFIVVPWMSLDLFRYWLGFLLLMKYFWDNRYAYKEVKHNSVFGKKTKRNIFGFHFLLALTEQTSLYPFLSNFSISSQSTLLEGFPSENILDFSLIHFSYLLGIGIGSYSLINLICWFWQDPAYRFYFWMMNKFKKLRIADIVRPVHLFFQSITVLFAFSSLPYFGIEYQITNPLGFLPNDQAFHQFKQTSFLTHPTSPAYYRSRLNFPRQKFFRYEDWAEYYHRNTPLDTSLYDQGAYRLYTMEDLSYGKDYEWMRRRSDKIKIRSRLKRLRWFPRNWANRLWEFTKTWSRRNVLWRNDILNMYQYSWDSKAPIIWNKLVFEEFFPTTFGQQKSFSRKETELKKHLGSEVLFSSTKKPISTNWDSFWGPDPDWTSKFLWNQNSLNNKEKQLWFNWQSRLNLTDNDTWWKWLVTNGSKSKAETLSFQNIIPQFSNKIQKGDFWEPQKRLISIYSENSQKKELVLESSTLRKFVRKLSARFKLAQIDKVSQLNNAEKKEVKTSFFLQPLNNGIWYNSNTLSSNSLKTLLLTPSFRDWTVFQTVMTNMNRILWWRRLTNASKSKSTDLSGKLSYQFDPKMKLKTLNQRLDGKKEEAKASSFLQLSTFSKPNNFLSNSALNNFKRFVKTQKLSYSENKFAKIQNKYLEIQMKQNLLINSNSSNKNNLSSLFSPSKTIEQFENKELKKETSSSLLPFAISPLSQSKNYKNMEINNLKVLNGKKSGAKWEKEKSLRRGKKLSFFPLLPISSLSPREKSSFSLEERENMGHFPPEAKLPGEPSFAFPTLFLTKKNNNKFILFKNKNKVNVNKWVPLNSVDVSSTLLHPLKYYLHKEQNFKRKLSFYGVKNKILSKSIKDSSSILNENGNERKAGALATNFSSQETKISSFPQNVSKTSSTDLFYSTYNTGSSLKSYPEATINQNQNWNSLSLKKNNYSEKLFPITKNKNKLPIFNFYLKTYFQTYKKTKLYVLNTKMKRQLGMGASARRKGRDYSNKLLKRSKILSNTPWIRQWIDQSGFLARRKRLETWIARQHYDPNELWSKIMKVDVDLFMNRQPSYYFLTNTEEKLLHLRRFLLFEHYDSLRWYTYMTNYRTMKNTIGGTKSFTNRMYNQQFKGTFHKVRHLFSLTPSSSNGSLLKFDRPLYNLEKTNQSSLTSQAHEELQNFTNFLKHDDNVLSEIDDFREKLLEKKAKAFFSNNDGEKSEAKASTVPQSFLNKSIGKMQENQSDASFFKASPTLEKNSIFSSETFLSSFEKRPMDLIEKSTQTLQQSIWENNLIRKNYISFLLEQKNYDLLTKFLVSNTLYTPESIKTKNYEKWEKDVSLRKEEDLTSSFSPSRLSLLKKNSTLRINKSIKTNLQTKLMISLFRKRQKWTRDYKRASEKLWKKWKLRSKLISNKTLYLLSNDKTNELNLPQLRTQLYSDQKQEKIVAPVTNPNYYGKNISTLDKKFLQIIKLKKLTEIIKSQDGKKEEAQEGSKPKLASFSHSSFLSLSSFNHNNTVVKEKAFSSMNNSTLSYLNRFNYNSVIGKALKEAIEIQYVSQGKTEKKQLNGKKETPDVSFDNIKILKRNIDLKNIFNNNIFTKKMIKDMYKNSFKHKKLSIAGAFQSKKSSTSLWTNSFLDYKLQNRLDNRFYNTSRNKLKSDEMNTKLLTQTNLQLYQKNLIRRERSNIQNFVFMKKFLLNDYNSPLTRSQIRPLPGKRTKALYEKSTASGSYSSNLIRKNNPFLSSINDIDLKILAYKNRKWVESVKTDNNLFQEKVDGKKKVAKATFFPSLSVSKLNNNWKLFLNKIKKSPKLVSGQMDQTLQTKMINEQNLMKGVRLSAQLSPILTNAITNNISKNALKKEIKTVFLMNEKSAGTVLEDSSVLKNFVRQKLTKTILSKQKIINSLEKPTIIRITKSLRKRQQDRIVRSLLKRHLNLKSRRKLFLKTKEINNQRMSLDRKYEIEERLFLNKISYFAELKQLLDLNNNSLSKDSIFKGKNEFVLANKNLLKINSFKNENNVANRDNLGSEEWEKERSLSFFPSKASFFNSSLDFPSKQQNFQLTESGKFTKSKNLVENFVIWLSLSNNKNLDSFSPLTEFSERQMKEKSQSSRLFSITNRRNEKNIVKNLKNKKVTVSIIKNFQNKGKQMGERKKFQLFPFKSFFSSPHFIDMFYLRKKEGIFFTKEKISGNVAESEKMRAGDKQSYLSSIKRSSLFINKLLTNNQNNRQNQNNESYLSFKLKQNFVNFSVLENEKNILRRSLRKFISPNSMPPFLFEKMRRGGEDQFYKSTRKYSEKFKPITNATKRKNSFVNNFLLKNWIRLKNLQKEKEESFSSPLSFSYNLNNNKNNKTDIKEKNNRLLSSFVFEKMGQKNSSKEELINLNKYIIFARTNQNKLSRQQMRKKLKKRRIIRLKRNDRLKTLRDHPLKFRSEQIQTFYNIRDSLKKWKNFSFISSKVKYNKAFWTGYNNRQLFSNTSGLNSKANTFSFPQTNIQVATFNDNLESQSRNYKPLLDNGKKSRAFPASEACGKLGKNCIFPLEKVNKLKLIDFSHRSVQPLKSKNYLQSLNLQKSEELNQKAGAKTQDFYSASLPFLENTLSPFYTNGYLSFSDSFENKNILNSDLFYTLYQDIFINSPAFNKIGLKSKSTDFFFQTNQLENSLNSKLLVNNTNMPFYAGWDDSVRKFVLTNRLLTRKEAGYEISNIFNKKNESQKFDIYSSVDKKLNNTNNVVFSSWPLKGKNAATTLFSQFPFMTAPETNVNNSDKQIRVVKAGTKYIIEGLTNSTKFNKDTSSFDNKWIQKNKNHLIKDKNNIKEIKGSIASDFSPNINFKKNKRIKTIIKSSKNEDQIGIRQTGQVISNLATATSRKTARRALFSSRPWRSKRQTTKAILFSLSQKDNQSSLNVRKNPKLFLSLNSKKEFMDTKLSSKLLLLRNLRHGNRSQTKLAYLRRLQNFIRPTGSAWKTTLNLSRRKKQRIKQSNFFSSRFSVRKRKKRGNNKNPRLRGDKNYKKTKRQYRQKLYLRPKNKPLRRRSLGVAFQNKLNYWRRQYQNLSTNQNSGLKDKVQLLNKQALNCASTNPNCFNVPSEIDDFRGKFLGKKALAFFPKNDGKILFSQNLKENLVYSQKDNEWTSSRRPRKLYRSLFKNPSRQNPILYSTLPGHSRSIPIIKNLPLPGSSVKTLNRIIKWSSADGAARFYRVNLSYGWAMELFLQNLHQKIKSKNNYLINGNKSEAEVSAFPLIKEYLNQLVNTNKNKFSSSRVFKRRFYKLRQLSYTMSLRLYDRWFFYYYKTGNSGEQSNGNSNFQEKTGREPIPISTFSRNRFNNQIKQVVLAVPSLSSMEPDLSQFKHIKKFLTFHLNENQSNFRSYLKNLRTTSYLKTQSITTEITPKLSNSGITDNSNKIENYDSPLLGDARTKDFDGLESFKLVSTGREEAEASSPFSRQKPGFEKSDLSKSGQFPEDKMNLVKSNKTLLKKEKKYAEDRFFFAQFNKPPLVDDSRLTFENNRHFPLNGGFVWPGDYLRLKTILLPKEMKDLYLLEKNKNFNGKKSGAKAI.

The next 6 helical transmembrane spans lie at 117–137, 152–172, 174–194, 222–242, 269–289, and 318–338; these read IFTGLVNSLFIWIPTSTATFL, AAALGTMAATVFWLASILFGL, FIVVPWMSLDLFRYWLGFLLL, IFGFHFLLALTEQTSLYPFLS, FSYLLGIGIGSYSLINLICWF, and HLFFQSITVLFAFSSLPYFGI. Disordered stretches follow at residues 3139 to 3164 and 3583 to 3612; these read FSVRKRKKRGNNKNPRLRGDKNYKKT and GREEAEASSPFSRQKPGFEKSDLSKSGQFP. The span at 3140-3149 shows a compositional bias: basic residues; the sequence is SVRKRKKRGN.

Belongs to the ycf78 family.

It localises to the plastid. The protein localises to the chloroplast membrane. This is an uncharacterized protein from Stigeoclonium helveticum (Green alga).